Consider the following 113-residue polypeptide: Ig heavy chain V-III region T957 (113 aa).

The region spanning 1-113 (EVKLEESGGG…YWGQGTLVTV (113 aa)) is the Ig-like domain. Cys-22 and Cys-98 are joined by a disulfide.

This Mus musculus (Mouse) protein is Ig heavy chain V-III region T957.